Consider the following 378-residue polypeptide: Non-functional pseudokinase ZRK6 (378 aa).

The Protein kinase domain occupies aspartate 34–isoleucine 378. Residues isoleucine 40–isoleucine 48 and lysine 83 each bind ATP.

The protein belongs to the protein kinase superfamily. Ser/Thr protein kinase family. ZRK subfamily. In terms of assembly, interacts with RPP13L4/ZAR1.

The polypeptide is Non-functional pseudokinase ZRK6 (Arabidopsis thaliana (Mouse-ear cress)).